The primary structure comprises 283 residues: Phosphatidylserine decarboxylase proenzyme (283 aa).

Catalysis depends on charge relay system; for autoendoproteolytic cleavage activity residues Asp-89, His-146, and Ser-249. The Schiff-base intermediate with substrate; via pyruvic acid; for decarboxylase activity role is filled by Ser-249. Residue Ser-249 is modified to Pyruvic acid (Ser); by autocatalysis.

This sequence belongs to the phosphatidylserine decarboxylase family. PSD-B subfamily. Prokaryotic type I sub-subfamily. In terms of assembly, heterodimer of a large membrane-associated beta subunit and a small pyruvoyl-containing alpha subunit. It depends on pyruvate as a cofactor. Post-translationally, is synthesized initially as an inactive proenzyme. Formation of the active enzyme involves a self-maturation process in which the active site pyruvoyl group is generated from an internal serine residue via an autocatalytic post-translational modification. Two non-identical subunits are generated from the proenzyme in this reaction, and the pyruvate is formed at the N-terminus of the alpha chain, which is derived from the carboxyl end of the proenzyme. The autoendoproteolytic cleavage occurs by a canonical serine protease mechanism, in which the side chain hydroxyl group of the serine supplies its oxygen atom to form the C-terminus of the beta chain, while the remainder of the serine residue undergoes an oxidative deamination to produce ammonia and the pyruvoyl prosthetic group on the alpha chain. During this reaction, the Ser that is part of the protease active site of the proenzyme becomes the pyruvoyl prosthetic group, which constitutes an essential element of the active site of the mature decarboxylase.

The protein resides in the cell membrane. The catalysed reaction is a 1,2-diacyl-sn-glycero-3-phospho-L-serine + H(+) = a 1,2-diacyl-sn-glycero-3-phosphoethanolamine + CO2. It functions in the pathway phospholipid metabolism; phosphatidylethanolamine biosynthesis; phosphatidylethanolamine from CDP-diacylglycerol: step 2/2. Functionally, catalyzes the formation of phosphatidylethanolamine (PtdEtn) from phosphatidylserine (PtdSer). The chain is Phosphatidylserine decarboxylase proenzyme from Legionella pneumophila subsp. pneumophila (strain Philadelphia 1 / ATCC 33152 / DSM 7513).